The sequence spans 1675 residues: Clathrin heavy chain 1 (1675 aa).

Alanine 2 is subject to N-acetylalanine. The globular terminal domain stretch occupies residues 2 to 479 (AQILPIRFQE…VDPTLALSVY (478 aa)). WD40-like repeat regions lie at residues 24 to 67 (NIGF…RPIS), 68 to 107 (ADSA…MTDD), 108 to 149 (VTFW…SSLA), 150 to 195 (GCQI…QPIE), 196 to 257 (GHAA…PEAQ), 258 to 301 (NDFP…ISGE), and 302 to 330 (TIFV…VCVE). A Phosphoserine modification is found at serine 67. Threonine 105 carries the post-translational modification Phosphothreonine. A Phosphotyrosine modification is found at tyrosine 184. Threonine 394 is subject to Phosphothreonine. The binding site for the uncoating ATPase, involved in lattice disassembly stretch occupies residues 449–465 (EKWLKEDKLECSEELGD). The flexible linker stretch occupies residues 480 to 523 (LRANVPNKVIQCFAETGQVQKIVLYAKKVGYTPDWIFLLRNVMR). A distal segment region spans residues 524–634 (ISPDQGQQFA…RALEHFTDLY (111 aa)). A heavy chain arm region spans residues 524 to 1675 (ISPDQGQQFA…QPQPGFGYSM (1152 aa)). 7 CHCR repeats span residues 537-683 (VQDE…QICV), 686-828 (ASKY…SEDV), 833-972 (ILVV…PLID), 979-1124 (LSET…VKEA), 1128-1269 (YIKA…FRLA), 1274-1420 (LHIV…LLLN), and 1423-1566 (LMVL…RECF). Tyrosine 634 carries the phosphotyrosine modification. A proximal segment region spans residues 639-1675 (AVVHTHLLNP…QPQPGFGYSM (1037 aa)). At lysine 737 the chain carries N6-succinyllysine. Residue lysine 856 is modified to N6-acetyllysine. The residue at position 899 (tyrosine 899) is a Phosphotyrosine. Position 1167 is a phosphoserine (serine 1167). The residue at position 1206 (tyrosine 1206) is a Phosphotyrosine. The segment at 1213–1522 (AAKLLYNNVS…YLFKGNNRWK (310 aa)) is involved in binding clathrin light chain. Residue serine 1229 is modified to Phosphoserine. N6-acetyllysine; alternate is present on lysine 1441. Lysine 1441 carries the N6-succinyllysine; alternate modification. A phosphotyrosine mark is found at tyrosine 1477 and tyrosine 1487. Serine 1494 is subject to Phosphoserine. Lysine 1501 carries the post-translational modification N6-acetyllysine. The interval 1550 to 1675 (AEELLQWFLQ…QPQPGFGYSM (126 aa)) is trimerization.

This sequence belongs to the clathrin heavy chain family. Clathrin triskelions, composed of 3 heavy chains and 3 light chains, are the basic subunits of the clathrin coat. In the presence of light chains, hub assembly is influenced by both the pH and the concentration of calcium. Interacts with HIP1. Interacts with DENND1A, DENND1B and DENND1C. Interacts with OCRL. Interacts with ERBB2. Interacts with FKBP6. Interacts with CKAP5 and TACC3 forming the TACC3/ch-TOG/clathrin complex located at spindle inter-microtubules bridges; the complex implicates clathrin triskelions; TACC3 and CLTC are proposed to form a composite microtubule interaction surface. Interacts with ATG16L1 (via N-terminus). Interacts with RFTN1; the interaction occurs in response to pathogens. Interacts with TMEM106B (via N-terminus). Interacts with DNAJC6; this interaction produces a local change in heavy-chain contacts, creating a detectable global distortion of the clathrin coat and leads to the recruitment of HSPA8.

Its subcellular location is the cytoplasmic vesicle membrane. The protein localises to the membrane. The protein resides in the coated pit. It is found in the melanosome. It localises to the cytoplasm. Its subcellular location is the cytoskeleton. The protein localises to the spindle. Functionally, clathrin is the major protein of the polyhedral coat of coated pits and vesicles. Two different adapter protein complexes link the clathrin lattice either to the plasma membrane or to the trans-Golgi network. Acts as a component of the TACC3/ch-TOG/clathrin complex proposed to contribute to stabilization of kinetochore fibers of the mitotic spindle by acting as inter-microtubule bridge. The TACC3/ch-TOG/clathrin complex is required for the maintenance of kinetochore fiber tension. Plays a role in early autophagosome formation. Interaction with DNAJC6 mediates the recruitment of HSPA8 to the clathrin lattice and creates local destabilization of the lattice promoting uncoating. The chain is Clathrin heavy chain 1 from Bos taurus (Bovine).